The sequence spans 417 residues: Actin-related protein 10 (417 aa).

Belongs to the actin family. Subunit of dynactin, a multiprotein complex part of a tripartite complex with dynein and a adapter, such as BICDL1, BICD2 or HOOK3. The dynactin complex is built around ACTR1A/ACTB filament and consists of an actin-related filament composed of a shoulder domain, a pointed end and a barbed end. Its length is defined by its flexible shoulder domain. The soulder is composed of 2 DCTN1 subunits, 4 DCTN2 and 2 DCTN3. The 4 DCNT2 (via N-terminus) bind the ACTR1A filament and act as molecular rulers to determine the length. The pointed end is important for binding dynein-dynactin cargo adapters. Consists of 4 subunits: ACTR10, DCNT4, DCTN5 and DCTN6. The barbed end is composed of a CAPZA1:CAPZB heterodimers, which binds ACTR1A/ACTB filament and dynactin and stabilizes dynactin.

The protein localises to the cytoplasm. Its subcellular location is the cytoskeleton. In terms of biological role, part of the dynactin complex that activates the molecular motor dynein for ultra-processive transport along microtubules. The sequence is that of Actin-related protein 10 (Actr10) from Mus musculus (Mouse).